A 49-amino-acid chain; its full sequence is Large ribosomal subunit protein bL33 (49 aa).

This sequence belongs to the bacterial ribosomal protein bL33 family.

The sequence is that of Large ribosomal subunit protein bL33 from Clostridium botulinum (strain ATCC 19397 / Type A).